The following is a 239-amino-acid chain: EF-hand domain-containing protein D2 (239 aa).

A disordered region spans residues M1–D51. N-acetylalanine is present on A2. At S11 the chain carries Phosphoserine. A compositionally biased stretch (low complexity) spans A32 to A46. 2 positions are modified to phosphoserine: S73 and S75. The residue at position 82 (Y82) is a Phosphotyrosine. 2 EF-hand domains span residues K91 to P126 and Q127 to G162. Residues D104, D108, E115, D140, D142, D144, K146, and E151 each coordinate Ca(2+). The residue at position 232 (K232) is an N6-acetyllysine.

Interacts with CASP9; with inactive form.

The protein localises to the membrane raft. May regulate B-cell receptor (BCR)-induced immature and primary B-cell apoptosis. Plays a role as negative regulator of the canonical NF-kappa-B-activating branch. Controls spontaneous apoptosis through the regulation of BCL2L1 abundance. The protein is EF-hand domain-containing protein D2 (Efhd2) of Rattus norvegicus (Rat).